The primary structure comprises 194 residues: Small ribosomal subunit protein uS4 (194 aa).

At lysine 66 the chain carries N6-acetyllysine. Residue lysine 93 forms a Glycyl lysine isopeptide (Lys-Gly) (interchain with G-Cter in SUMO2) linkage. One can recognise an S4 RNA-binding domain in the interval 108–182 (RRLQTQVFKL…VKRKNAKKGQ (75 aa)). Position 116 is an N6-acetyllysine (lysine 116). Lysine 139 is covalently cross-linked (Glycyl lysine isopeptide (Lys-Gly) (interchain with G-Cter in SUMO2)). Residue serine 153 is modified to Phosphoserine. Lysine 155 carries the post-translational modification N6-acetyllysine. Residues 162–194 (RSPYGGGRPGRVKRKNAKKGQGGAGAGDDEEED) form a disordered region. Residue serine 163 is modified to Phosphoserine.

Belongs to the universal ribosomal protein uS4 family. Component of the small ribosomal subunit. Part of the small subunit (SSU) processome, composed of more than 70 proteins and the RNA chaperone small nucleolar RNA (snoRNA) U3.

It localises to the cytoplasm. The protein localises to the nucleus. The protein resides in the nucleolus. Component of the small ribosomal subunit. The ribosome is a large ribonucleoprotein complex responsible for the synthesis of proteins in the cell. Part of the small subunit (SSU) processome, first precursor of the small eukaryotic ribosomal subunit. During the assembly of the SSU processome in the nucleolus, many ribosome biogenesis factors, an RNA chaperone and ribosomal proteins associate with the nascent pre-rRNA and work in concert to generate RNA folding, modifications, rearrangements and cleavage as well as targeted degradation of pre-ribosomal RNA by the RNA exosome. The chain is Small ribosomal subunit protein uS4 (RPS9) from Papio anubis (Olive baboon).